A 336-amino-acid chain; its full sequence is Holliday junction branch migration complex subunit RuvB (336 aa).

The interval 4–184 is large ATPase domain (RuvB-L); it reads ADRLISAGAT…FGIVQRLEFY (181 aa). Residues I23, R24, G65, K68, T69, T70, 131 to 133, R174, Y184, and R221 each bind ATP; that span reads EDY. T69 contributes to the Mg(2+) binding site. Residues 185-255 form a small ATPAse domain (RuvB-S) region; it reads QVPDLQHIVG…IAAQALDMLN (71 aa). Positions 258–336 are head domain (RuvB-H); it reads AEGFDYMDRK…HFGITPPEMP (79 aa). DNA contacts are provided by R294, R313, and R318.

It belongs to the RuvB family. As to quaternary structure, homohexamer. Forms an RuvA(8)-RuvB(12)-Holliday junction (HJ) complex. HJ DNA is sandwiched between 2 RuvA tetramers; dsDNA enters through RuvA and exits via RuvB. An RuvB hexamer assembles on each DNA strand where it exits the tetramer. Each RuvB hexamer is contacted by two RuvA subunits (via domain III) on 2 adjacent RuvB subunits; this complex drives branch migration. In the full resolvosome a probable DNA-RuvA(4)-RuvB(12)-RuvC(2) complex forms which resolves the HJ.

Its subcellular location is the cytoplasm. The catalysed reaction is ATP + H2O = ADP + phosphate + H(+). In terms of biological role, the RuvA-RuvB-RuvC complex processes Holliday junction (HJ) DNA during genetic recombination and DNA repair, while the RuvA-RuvB complex plays an important role in the rescue of blocked DNA replication forks via replication fork reversal (RFR). RuvA specifically binds to HJ cruciform DNA, conferring on it an open structure. The RuvB hexamer acts as an ATP-dependent pump, pulling dsDNA into and through the RuvAB complex. RuvB forms 2 homohexamers on either side of HJ DNA bound by 1 or 2 RuvA tetramers; 4 subunits per hexamer contact DNA at a time. Coordinated motions by a converter formed by DNA-disengaged RuvB subunits stimulates ATP hydrolysis and nucleotide exchange. Immobilization of the converter enables RuvB to convert the ATP-contained energy into a lever motion, pulling 2 nucleotides of DNA out of the RuvA tetramer per ATP hydrolyzed, thus driving DNA branch migration. The RuvB motors rotate together with the DNA substrate, which together with the progressing nucleotide cycle form the mechanistic basis for DNA recombination by continuous HJ branch migration. Branch migration allows RuvC to scan DNA until it finds its consensus sequence, where it cleaves and resolves cruciform DNA. The sequence is that of Holliday junction branch migration complex subunit RuvB from Salmonella choleraesuis (strain SC-B67).